A 247-amino-acid chain; its full sequence is Carboxy-S-adenosyl-L-methionine synthase (247 aa).

S-adenosyl-L-methionine is bound by residues Tyr39, 64-66 (GCS), 89-90 (DN), 117-118 (DI), Asn132, and Arg199.

It belongs to the class I-like SAM-binding methyltransferase superfamily. Cx-SAM synthase family. In terms of assembly, homodimer.

It carries out the reaction prephenate + S-adenosyl-L-methionine = carboxy-S-adenosyl-L-methionine + 3-phenylpyruvate + H2O. Its function is as follows. Catalyzes the conversion of S-adenosyl-L-methionine (SAM) to carboxy-S-adenosyl-L-methionine (Cx-SAM). This Escherichia coli (strain K12 / MC4100 / BW2952) protein is Carboxy-S-adenosyl-L-methionine synthase.